Here is a 163-residue protein sequence, read N- to C-terminus: MITQIRVDDRLVHGQVAVVWTKELNAPLLVVANDEAAKNEITQMTLKMAVPNGMKLLIRSVEDSIKLFNDPRATDKRIFVIVNSVKDACAIAKEVPDLEAVNVANVGRFDKSDPASKVKVTPSLLLNPEEMAAAKELVSLPELDVFNQVLPSNTKVHLSQLVN.

The PTS EIIB type-4 domain maps to 1-163 (MITQIRVDDR…TKVHLSQLVN (163 aa)). The active-site Pros-phosphohistidine intermediate is His-13.

It localises to the cytoplasm. Its function is as follows. The phosphoenolpyruvate-dependent sugar phosphotransferase system (sugar PTS), a major carbohydrate active -transport system, catalyzes the phosphorylation of incoming sugar substrates concomitantly with their translocation across the cell membrane. This chain is Probable phosphotransferase enzyme IIB component M6_Spy0801, found in Streptococcus pyogenes serotype M6 (strain ATCC BAA-946 / MGAS10394).